A 128-amino-acid chain; its full sequence is Glycine cleavage system H protein (128 aa).

The 83-residue stretch at 25-107 (IITVGITHHA…YGAGWFFKLK (83 aa)) folds into the Lipoyl-binding domain. N6-lipoyllysine is present on K66.

This sequence belongs to the GcvH family. As to quaternary structure, the glycine cleavage system is composed of four proteins: P, T, L and H. (R)-lipoate serves as cofactor.

Functionally, the glycine cleavage system catalyzes the degradation of glycine. The H protein shuttles the methylamine group of glycine from the P protein to the T protein. The protein is Glycine cleavage system H protein of Neisseria meningitidis serogroup A / serotype 4A (strain DSM 15465 / Z2491).